A 529-amino-acid chain; its full sequence is Bifunctional purine biosynthesis protein PurH (529 aa).

An MGS-like domain is found at 1–148; that stretch reads MQPPRPVRRA…KNHKDVAIVV (148 aa).

The protein belongs to the PurH family.

The catalysed reaction is (6R)-10-formyltetrahydrofolate + 5-amino-1-(5-phospho-beta-D-ribosyl)imidazole-4-carboxamide = 5-formamido-1-(5-phospho-D-ribosyl)imidazole-4-carboxamide + (6S)-5,6,7,8-tetrahydrofolate. It carries out the reaction IMP + H2O = 5-formamido-1-(5-phospho-D-ribosyl)imidazole-4-carboxamide. It functions in the pathway purine metabolism; IMP biosynthesis via de novo pathway; 5-formamido-1-(5-phospho-D-ribosyl)imidazole-4-carboxamide from 5-amino-1-(5-phospho-D-ribosyl)imidazole-4-carboxamide (10-formyl THF route): step 1/1. Its pathway is purine metabolism; IMP biosynthesis via de novo pathway; IMP from 5-formamido-1-(5-phospho-D-ribosyl)imidazole-4-carboxamide: step 1/1. The sequence is that of Bifunctional purine biosynthesis protein PurH from Sodalis glossinidius (strain morsitans).